The chain runs to 314 residues: Probable 2-(5''-triphosphoribosyl)-3'-dephosphocoenzyme-A synthase (314 aa).

The protein belongs to the CitG/MdcB family.

The catalysed reaction is 3'-dephospho-CoA + ATP = 2'-(5''-triphospho-alpha-D-ribosyl)-3'-dephospho-CoA + adenine. The sequence is that of Probable 2-(5''-triphosphoribosyl)-3'-dephosphocoenzyme-A synthase from Photobacterium profundum (strain SS9).